The primary structure comprises 241 residues: Probable 2-phosphosulfolactate phosphatase (241 aa).

It belongs to the ComB family. Requires Mg(2+) as cofactor.

It catalyses the reaction (2R)-O-phospho-3-sulfolactate + H2O = (2R)-3-sulfolactate + phosphate. This chain is Probable 2-phosphosulfolactate phosphatase, found in Caldanaerobacter subterraneus subsp. tengcongensis (strain DSM 15242 / JCM 11007 / NBRC 100824 / MB4) (Thermoanaerobacter tengcongensis).